The chain runs to 226 residues: Thioredoxin domain-containing protein 9 (226 aa).

In terms of domain architecture, Thioredoxin spans 75-180 (EIGSERDFFQ…TTETLEWRLG (106 aa)). Phosphoserine occurs at positions 188, 221, and 223.

Forms ternary complexes with the chaperonin TCP1 complex, spanning the cylindrical chaperonin cavity and contacting at least 2 subunits. Expressed in testis, liver, heart, kidney, brain, spleen and lung.

It localises to the cytoplasm. Its subcellular location is the nucleus. The protein resides in the cytoskeleton. It is found in the microtubule organizing center. The protein localises to the centrosome. It localises to the midbody. Functionally, significantly diminishes the chaperonin TCP1 complex ATPase activity, thus negatively impacts protein folding, including that of actin or tubulin. The polypeptide is Thioredoxin domain-containing protein 9 (Txndc9) (Mus musculus (Mouse)).